The primary structure comprises 444 residues: ATP-dependent protease ATPase subunit HslU (444 aa).

ATP is bound by residues I18 and 60–65 (GVGKTE). Positions 141–161 (DAWGNNEEGNNDSGTRQSFRK) are disordered. Polar residues predominate over residues 147-157 (EEGNNDSGTRQ). D257, E322, and R394 together coordinate ATP.

This sequence belongs to the ClpX chaperone family. HslU subfamily. A double ring-shaped homohexamer of HslV is capped on each side by a ring-shaped HslU homohexamer. The assembly of the HslU/HslV complex is dependent on binding of ATP.

The protein resides in the cytoplasm. ATPase subunit of a proteasome-like degradation complex; this subunit has chaperone activity. The binding of ATP and its subsequent hydrolysis by HslU are essential for unfolding of protein substrates subsequently hydrolyzed by HslV. HslU recognizes the N-terminal part of its protein substrates and unfolds these before they are guided to HslV for hydrolysis. This is ATP-dependent protease ATPase subunit HslU from Aliivibrio fischeri (strain ATCC 700601 / ES114) (Vibrio fischeri).